The following is a 121-amino-acid chain: uncharacterized protein (121 aa).

This is an uncharacterized protein from Microplitis demolitor (Parasitoid wasp).